A 522-amino-acid chain; its full sequence is Involucrin (522 aa).

Polar residues predominate over residues 1-15 (MSQQHTLPVTLSPAL). Disordered regions lie at residues 1-126 (MSQQ…LEEE), 159-329 (QEGQ…LVQQ), and 366-496 (QEGQ…QPVL). The span at 76-91 (EQQQQEPQEQELQQQH) shows a compositional bias: low complexity. Residues 92–126 (WEQHEEHQKAENPEQQLKQEKAQRDQQLNEHLEEE) show a composition bias toward basic and acidic residues. Over residues 169–181 (QEGQLELPEQQEG) the composition is skewed to low complexity. 5 stretches are compositionally biased toward basic and acidic residues: residues 182-198 (QLEH…HLDQ), 214-231 (KHLE…HQKG), 252-264 (QLKH…KQPE), 274-290 (KHLE…EHQE), and 305-323 (QLEE…EGQL). Positions 375-389 (QQQGQLEVSEQQVGQ) are enriched in low complexity. Basic and acidic residues-rich tracts occupy residues 391-401 (KHLEQEGKQLE), 409-418 (QLKHLEKQEA), and 431-465 (KHPE…DLEQ). Low complexity predominate over residues 466–479 (QKGQLEQQQGQLEQ).

It belongs to the involucrin family. In terms of assembly, directly or indirectly cross-linked to cornifelin (CNFN). Substrate of transglutaminase. Specific glutamines or lysines are cross-linked to keratins, desmoplakin and to inter involucrin molecules. Keratinocytes of epidermis and other stratified squamous epithelia.

Its subcellular location is the cytoplasm. Part of the insoluble cornified cell envelope (CE) of stratified squamous epithelia. The chain is Involucrin (IVL) from Hylobates lar (Lar gibbon).